The primary structure comprises 352 residues: Biotin synthase (352 aa).

The Radical SAM core domain occupies 44 to 262 (NRVQVSTLLS…LAVARILMPQ (219 aa)). Residues C59, C63, and C66 each coordinate [4Fe-4S] cluster. [2Fe-2S] cluster is bound by residues C103, C134, C194, and R266.

Belongs to the radical SAM superfamily. Biotin synthase family. In terms of assembly, homodimer. It depends on [4Fe-4S] cluster as a cofactor. The cofactor is [2Fe-2S] cluster.

It carries out the reaction (4R,5S)-dethiobiotin + (sulfur carrier)-SH + 2 reduced [2Fe-2S]-[ferredoxin] + 2 S-adenosyl-L-methionine = (sulfur carrier)-H + biotin + 2 5'-deoxyadenosine + 2 L-methionine + 2 oxidized [2Fe-2S]-[ferredoxin]. Its pathway is cofactor biosynthesis; biotin biosynthesis; biotin from 7,8-diaminononanoate: step 2/2. In terms of biological role, catalyzes the conversion of dethiobiotin (DTB) to biotin by the insertion of a sulfur atom into dethiobiotin via a radical-based mechanism. The sequence is that of Biotin synthase from Pseudomonas savastanoi pv. phaseolicola (strain 1448A / Race 6) (Pseudomonas syringae pv. phaseolicola (strain 1448A / Race 6)).